Consider the following 141-residue polypeptide: Large ribosomal subunit protein uL11 (141 aa).

Belongs to the universal ribosomal protein uL11 family. As to quaternary structure, part of the ribosomal stalk of the 50S ribosomal subunit. Interacts with L10 and the large rRNA to form the base of the stalk. L10 forms an elongated spine to which L12 dimers bind in a sequential fashion forming a multimeric L10(L12)X complex. One or more lysine residues are methylated.

In terms of biological role, forms part of the ribosomal stalk which helps the ribosome interact with GTP-bound translation factors. The sequence is that of Large ribosomal subunit protein uL11 from Chlorobium phaeobacteroides (strain BS1).